The sequence spans 77 residues: Translation initiation factor IF-1, chloroplastic (77 aa).

Residues 1–71 (MKEQKLIHEG…TKGRIIYRLR (71 aa)) form the S1-like domain.

This sequence belongs to the IF-1 family. Component of the 30S ribosomal translation pre-initiation complex which assembles on the 30S ribosome in the order IF-2 and IF-3, IF-1 and N-formylmethionyl-tRNA(fMet); mRNA recruitment can occur at any time during PIC assembly.

The protein resides in the plastid. Its subcellular location is the chloroplast. Its function is as follows. One of the essential components for the initiation of protein synthesis. Stabilizes the binding of IF-2 and IF-3 on the 30S subunit to which N-formylmethionyl-tRNA(fMet) subsequently binds. Helps modulate mRNA selection, yielding the 30S pre-initiation complex (PIC). Upon addition of the 50S ribosomal subunit IF-1, IF-2 and IF-3 are released leaving the mature 70S translation initiation complex. This Drimys granadensis protein is Translation initiation factor IF-1, chloroplastic.